Here is a 439-residue protein sequence, read N- to C-terminus: Probable glycine dehydrogenase (decarboxylating) subunit 1 (439 aa).

It belongs to the GcvP family. N-terminal subunit subfamily. As to quaternary structure, the glycine cleavage system is composed of four proteins: P, T, L and H. In this organism, the P 'protein' is a heterodimer of two subunits.

The catalysed reaction is N(6)-[(R)-lipoyl]-L-lysyl-[glycine-cleavage complex H protein] + glycine + H(+) = N(6)-[(R)-S(8)-aminomethyldihydrolipoyl]-L-lysyl-[glycine-cleavage complex H protein] + CO2. In terms of biological role, the glycine cleavage system catalyzes the degradation of glycine. The P protein binds the alpha-amino group of glycine through its pyridoxal phosphate cofactor; CO(2) is released and the remaining methylamine moiety is then transferred to the lipoamide cofactor of the H protein. This chain is Probable glycine dehydrogenase (decarboxylating) subunit 1, found in Aquifex aeolicus (strain VF5).